The chain runs to 2499 residues: MEKPTVHVDVDPQSPFVLQLQKSFPQFEIVAQQVTPNDHANARAFSHLASKLIEHEIPTSVTILDIGSAPARRMYSEHKYHCVCPMRSPEDPDRLMNYASRLADKAGEITNKRLHDKLADLKSVLESPDAETGTICFHNDVICRTTAEVSVMQNVYINAPSTIYHQALKGVRKLYWIGFDTTQFMFSSMAGSYPSYNTNWADERVLEARNIGLCSTKLREGTMGKLSTFRKKALKPGTNVYFSVGSTLYPENRADLQSWHLPSVFHLKGKQSFTCRCDTAVNCEGYVVKKITISPGITGRVNRYTVTNNSEGFLLCKITDTVKGERVSFPVCTYIPPSICDQMTGILATDIQPEDAQKLLVGLNQRIVVNGKTNRNTNTMQNYLLPAVATGLSKWAKERKADCSDEKPLNVRERKLAFGCLWAFKTKKIHSFYRPPGTQTIVKVAAEFSAFPMSSVWTTSLPMSLRQKVKLLLVKKTNKPVVTITDTAVKNAQEAYNEAVETAEAEEKAKALPPLKPTAPPVAEDVKCEVTDLVDDAGAALVETPRGKIKIIPQEGDVRIGSYTVISPAAVLRNQQLEPIHELAEQVKIITHGGRTGRYSVEPYDAKVLLPTGCPMSWQHFAALSESATLVYNEREFLNRKLHHIATKGAAKNTEEEQYKVCKAKDTDHEYVYDVDARKCVKREHAQGLVLVGELTNPPYHELAYEGLRTRPAAPYHIETLGVIGTPGSGKSAIIKSTVTLKDLVTSGKKENCKEIENDVQKMRGMTIATRTVDSVLLNGWKKAVDVLYVDEAFACHAGTLMALIAIVKPRRKVVLCGDPKQWPFFNLMQLKVNFNNPERDLCTSTHYKYISRRCTQPVTAIVSTLHYDGKMRTTNPCKRAIEIDVNGSTKPKKGDIVLTCFRGWVKQGQIDYPGPGGHDRAASQGLTRRGVYAVRQKVNENPLYAEKSEHVNVLLTRTEDRIVWKTLQGDPWIKYLTNVPKGNFTATLEEWQAEHEDIMKAINSTSTVSDPFASKVNTCWAKAIIPILRTAGIELTFEQWEDLFPQFRNDQPYSVMYALDVICTKMFGMDLSSGIFSRPEIPLTFHPADVGRVRAHWDNSPGGQKFGYNKAVIPTCKKYPVYLRAGKGDQILPIYGRVSVPSARNNLVPLNRNLPHSLTASLQKKEAAPLHKFLNQLPGHSMLLVSKETCYCVSKRITWVAPLGVRGADHNHDLHFGFPPLSRYDLVVVNMGQPYRFHHYQQCEEHAGLMRTLARSALNCLKPGGTLALKAYGFADSNSEDVVLSLARKFVRASAVRPSCTQFNTEMFFVFRQLDNDRERQFTQHHLNLAVSNIFDNYKDGSGAAPSYRVKRMNIADCTEEAVVNAANARGKPGDGVCRAIFKKWPKSFENATTEVETAVMKPCHNKVVIHAVGPDFRKYTLEEATKLLQNAYHDVAKIVNEKGISSVAIPLLSTGIYAAGADRLDLSLRCLFTALDRTDADVTIYCLDKKWEQRIADAIRMREQVTELKDPDIEIDEGLTRVHPDSCLKDHIGYSTQYGKLYSYFEGTKFHQTAKDIAEIRALFPDVQAANEQICLYTLGEPMESIREKCPVEDSPASAPPKTIPCLCMYAMTAERICRVRSNSVTNITVCSSFPLPKYRIKNVQKIQCTKVVLFNPDVPPYIPARVYINKDEPPVTPHTDSPPDTCSSRLSLTPTLSNAESDIVSLTFSEIDSELSSLNEPARHVMISSFKLRYTAIQALPQKLSWMREDRTPRQPPPVPPPRPKRAAKLSRLANQLNELRRHATISSVQAEVHYNSGFTPEAELNERGSILRKPPPVPPLRPKQTTNLSRLANQLSMPITFGDFAEGELDRLLTPSPTPTFGDFSQEEMDRFFGNRQYXLTGVGGYIFSSDTGPGHLQQKSVIQNSTTEILIERSRLEKIHAPVLDLQKEEMLKCRYQMSPTVANKSRYQSRKVENMKAVTTGRLLDGLKMYVTPDVEAECYKYTYPKPMYSASVPDRFVSPEVAVAVCNNFFHENYPTVASYQITDEYDAYLDMVEGSVSCLDTATFCPAKLRSFPKTHSYLEPTLRSAVPSAFQNTLQNVLSAATKRNCNVTQMRELPVLDSAVFNVECFKKYACNTDYWEEFKEKPIRITTECVTSYVARLKGPEAAALFAKTHQLVPLQEVPMDRFVMDMKRDVKVTPGTKHTEERPKVQVIQAAEPLATAYLCGIHRELVRRLTAVLLPNIHTLFDMSAEDFDAIIAANFSYVHPVLETDIGSFDKSQDDSLALTALMILEDLGVDDRLMDLIECAFGEITSVHLPTATTFKFGAMMKSGMFLTLFVNTVLNVVIASRVLEQRLRDSKCAAFIGDDNIIHGVVSDKIMADRCATWMNMEVKIIDAVIGIKAPYFCGGFILEDQVTHTACRVSDPLKRLFKLGKPLPVDDEQDHDRRRALEDETRAWFRVGIQGELLKAVESRYEVQEVQPVLLALATFSRSDKAFKALRGSPRHLYGGPK.

The region spanning 30-260 is the Alphavirus-like MT domain; sequence VAQQVTPNDH…ENRADLQSWH (231 aa). A nsP1 membrane-binding region spans residues 245–264; that stretch reads GSTLYPENRADLQSWHLPSV. A lipid anchor (S-palmitoyl cysteine; by host) is attached at C420. Positions 694–849 constitute a (+)RNA virus helicase ATP-binding domain; the sequence is ELTNPPYHEL…RDLCTSTHYK (156 aa). Position 725 to 732 (725 to 732) interacts with a ribonucleoside 5'-triphosphate; that stretch reads GTPGSGKS. The (+)RNA virus helicase C-terminal domain occupies 850-998; sequence YISRRCTQPV…LEEWQAEHED (149 aa). The 329-residue stretch at 1011–1339 folds into the Peptidase C9 domain; it reads DPFASKVNTC…LAVSNIFDNY (329 aa). Positions 1012 to 1031 are nucleolus localization signal; the sequence is PFASKVNTCWAKAIIPILRT. The active-site For cysteine protease nsP2 activity is the C1020. The Nuclear export signal signature appears at 1065-1074; sequence TKMFGMDLSS. Residue H1097 is the For cysteine protease nsP2 activity of the active site. A Nuclear localization signal motif is present at residues 1194 to 1198; that stretch reads VSKRI. Residues 1346 to 1505 form the Macro domain; the sequence is APSYRVKRMN…RIADAIRMRE (160 aa). ADP-D-ribose contacts are provided by N1369, G1377, G1457, I1458, and Y1459. Positions 1608, 1610, 1633, and 1651 each coordinate Zn(2+). 2 consecutive short sequence motifs (FGDF; binding to host G3BP1) follow at residues 1845 to 1848 and 1865 to 1868; these read FGDF. A RdRp catalytic domain is found at 2253–2368; that stretch reads HPVLETDIGS…HGVVSDKIMA (116 aa).

In terms of assembly, interacts with non-structural protein 3. Interacts with RNA-directed RNA polymerase nsP4. Interacts with protease nsP2. interacts with itself. As to quaternary structure, interacts with mRNA-capping enzyme nsP1. Interacts with host DDX1. Interacts with host DDX3. Interacts (via C-terminus) with host G3BP1; this interaction inhibits the formation of host stress granules on viral mRNAs and the nsp3-G3BP1 complexes bind viral RNAs and probably orchestrate the assembly of viral replication complexes. Interacts (via C-terminus) with host G3BP2; this interaction inhibits the formation of host stress granules on viral mRNAs and the nsp3-G3BP2 complexes bind viral RNAs and probably orchestrate the assembly of viral replication complexes. Interacts with mRNA-capping enzyme nsP1. Interacts with protease nsP2. interacts with itself. In terms of assembly, interacts with RNA-directed RNA polymerase nsP4. Interacts with mRNA-capping enzyme nsP1. Interacts with KPNA1/karyopherin-alpha1; this interaction probably allows the active transport of protease nsP2 into the host nucleus. Mg(2+) is required as a cofactor. The cofactor is Mn(2+). Post-translationally, specific enzymatic cleavages in vivo yield mature proteins. The processing of the polyprotein is temporally regulated. In early stages (1.7 hpi), P1234 is first cleaved in trans through its nsP2 protease activity, releasing P123' and nsP4, which associate to form the early replication complex. At the same time, P1234 is also cut at the nsP1/nsP2 site early in infection but with lower efficiency. After replication of the viral minus-strand RNAs (4 hpi), the polyproteins are cut at the nsP1/nsP2 and nsP2/nsP3 sites very efficiently, preventing accumulation of P123' and P1234 and allowing the formation of the late replication complex. NsP3'/nsP4 site is not cleaved anymore and P34 is produced rather than nsP4. Specific enzymatic cleavages in vivo yield mature proteins. The processing of the polyprotein is temporally regulated. In early stages (1.7 hpi), P123 is cleaved at the nsP1/nsP2 site with low efficiency. After replication of the viral minus-strand RNAs (4 hpi), the polyproteins are cut at the nsP1/nsP2 and nsP2/nsP3 sites very efficiently, preventing accumulation of P123 and allowing the formation of the late replication complex. In terms of processing, specific enzymatic cleavages in vivo yield mature proteins. The processing of the polyprotein is temporally regulated. In early stages (1.7 hpi), P123' is cleaved at the nsP1/nsP2 site with low efficiency. After replication of the viral minus-strand RNAs (4 hpi), the polyproteins are cut at the nsP1/nsP2 and nsP2/nsP3 sites very efficiently, preventing accumulation of P123' and allowing the formation of the late replication complex. Post-translationally, palmitoylated by host palmitoyltransferases ZDHHC2 and ZDHHC19. Phosphorylated by host on serines and threonines. In terms of processing, ubiquitinated; targets the protein for rapid degradation via the ubiquitin system. Nsp4 is present in extremely low quantities due to low frequency of translation through the amber stop-codon and the degradation by the ubiquitin pathway.

The protein resides in the host cytoplasmic vesicle membrane. It localises to the host cell membrane. The protein localises to the host cell projection. It is found in the host filopodium. Its subcellular location is the host nucleus. The protein resides in the host cytoplasm. It catalyses the reaction GTP + S-adenosyl-L-methionine = N(7)-methyl-GTP + S-adenosyl-L-homocysteine. The catalysed reaction is N(7)-methyl-GTP + L-histidyl-[protein] = N(tele)-(N(7)-methylguanosine 5'-phospho)-L-histidyl-[protein] + diphosphate. The enzyme catalyses N(tele)-(N(7)-methylguanosine 5'-phospho)-L-histidyl-[protein] + a 5'-end diphospho-(purine-ribonucleoside) in mRNA + H(+) = a 5'-end (N(7)-methyl 5'-triphosphoguanosine)-(purine-ribonucleoside) in mRNA + L-histidyl-[protein]. It carries out the reaction a 5'-end triphospho-ribonucleoside in mRNA + H2O = a 5'-end diphospho-ribonucleoside in mRNA + phosphate + H(+). It catalyses the reaction a ribonucleoside 5'-triphosphate + H2O = a ribonucleoside 5'-diphosphate + phosphate + H(+). The catalysed reaction is ATP + H2O = ADP + phosphate + H(+). The enzyme catalyses RNA(n) + a ribonucleoside 5'-triphosphate = RNA(n+1) + diphosphate. It carries out the reaction RNA(n) + ATP = RNA(n)-3'-adenine ribonucleotide + diphosphate. It catalyses the reaction 4-O-(ADP-D-ribosyl)-L-aspartyl-[protein] + H2O = L-aspartyl-[protein] + ADP-D-ribose + H(+). The catalysed reaction is 5-O-(ADP-D-ribosyl)-L-glutamyl-[protein] + H2O = L-glutamyl-[protein] + ADP-D-ribose + H(+). The enzyme catalyses ADP-alpha-D-ribose 1''-phosphate + H2O = ADP-D-ribose + phosphate. Functionally, inactive precursor of the viral replicase, which is activated by cleavages carried out by the viral protease nsP2. In terms of biological role, the early replication complex formed by the polyprotein P123 and nsP4 synthesizes minus-strand RNAs. As soon P123 is cleaved into mature proteins, the plus-strand RNAs synthesis begins. The early replication complex formed by the polyprotein P123' and nsP4 synthesizes minus-strand RNAs. Polyprotein P123' is a short-lived polyprotein that accumulates during early stage of infection. As soon P123' is cleaved into mature proteins, the plus-strand RNAs synthesis begins. Its function is as follows. Cytoplasmic capping enzyme that catalyzes two virus-specific reactions: methyltransferase and nsP1 guanylyltransferase. mRNA-capping is necessary since all viral RNAs are synthesized in the cytoplasm, and host capping enzymes are restricted to the nucleus. The enzymatic reaction involves a covalent link between 7-methyl-GMP and nsP1, whereas eukaryotic capping enzymes form a covalent complex only with GMP. nsP1 capping consists in the following reactions: GTP is first methylated into 7-methyl-GMP and then is covalently linked to nsP1 to form the m7GMp-nsP1 complex from which 7-methyl-GMP complex is transferred to the mRNA to create the cap structure. NsP1 is needed for the initiation of the minus-strand RNAs synthesis. Probably serves as a membrane anchor for the replication complex composed of nsP1-nsP4. Palmitoylated nsP1 is remodeling host cell cytoskeleton, and induces filopodium-like structure formation at the surface of the host cell. Functionally, multifunctional protein whose N-terminus is part of the RNA polymerase complex and displays NTPase, RNA triphosphatase and helicase activities. NTPase and RNA triphosphatase are involved in viral RNA capping and helicase keeps a check on the dsRNA replication intermediates. The C-terminus harbors a protease that specifically cleaves the polyproteins and releases the mature proteins. Required for the shutoff of minus-strand RNAs synthesis. Specifically inhibits the host IFN response by promoting the nuclear export of host STAT1. Also inhibits host transcription by inducing rapid proteasome-dependent degradation of POLR2A, a catalytic subunit of the RNAPII complex. The resulting inhibition of cellular protein synthesis serves to ensure maximal viral gene expression and to evade host immune response. In terms of biological role, seems to be essential for minus-strand RNAs and subgenomic 26S mRNAs synthesis. Displays mono-ADP-ribosylhydrolase activity. ADP-ribosylation is a post-translational modification that controls various processes of the host cell and the virus probably needs to revert it for optimal viral replication. Binds proteins of FXR family and sequesters them into the viral RNA replication complexes thereby inhibiting the formation of host stress granules on viral mRNAs. The nsp3'-FXR complexes bind viral RNAs and probably orchestrate the assembly of viral replication complexes, thanks to the ability of FXR family members to self-assemble and bind DNA. Seems to be essential for minus-strand RNAs and subgenomic 26S mRNAs synthesis. Displays mono-ADP-ribosylhydrolase activity. ADP-ribosylation is a post-translantional modification that controls various processes of the host cell and the virus probably needs to revert it for optimal viral replication. Binds proteins of G3BP family and sequesters them into the viral RNA replication complexes thereby inhibiting the formation of host stress granules on viral mRNAs. The nsp3-G3BP complexes bind viral RNAs and probably orchestrate the assembly of viral replication complexes, thanks to the ability of G3BP family members to self-assemble and bind DNA. Its function is as follows. RNA dependent RNA polymerase. Replicates genomic and antigenomic RNA by recognizing replications specific signals. The early replication complex formed by the polyprotein P123 and nsP4 synthesizes minus-strand RNAs. The late replication complex composed of fully processed nsP1-nsP4 is responsible for the production of genomic and subgenomic plus-strand RNAs. The core catalytic domain of nsP4 also possesses terminal adenylyltransferase (TATase) activity that is probably involved in maintenance and repair of the poly(A) tail, an element required for replication of the viral genome. The sequence is that of Polyprotein P1234 from Aura virus (AURAV).